The chain runs to 235 residues: MEPKRVAEGKTKIVYEFDPEHYLLRFKDSITAGDGARKDELPGKGTLNAQTSALFFRLLEKNDIRTHYVGMYDEKTMIVTKLKMIPVEVVLRNIATGSIVKRLPIKEGEVFDPPIVEFFLKDDLRHDPLLNYSHLQYFNLLTRKEAEIVEEVIVKVNAVMKNFLKERGLVLYDLKLEFGKDKDNNLIVGDEITLDSMRVRDEKTNKILDKDLYRKGESLEVVKKAYEDFFNLISR.

Belongs to the SAICAR synthetase family.

The enzyme catalyses 5-amino-1-(5-phospho-D-ribosyl)imidazole-4-carboxylate + L-aspartate + ATP = (2S)-2-[5-amino-1-(5-phospho-beta-D-ribosyl)imidazole-4-carboxamido]succinate + ADP + phosphate + 2 H(+). It participates in purine metabolism; IMP biosynthesis via de novo pathway; 5-amino-1-(5-phospho-D-ribosyl)imidazole-4-carboxamide from 5-amino-1-(5-phospho-D-ribosyl)imidazole-4-carboxylate: step 1/2. The sequence is that of Phosphoribosylaminoimidazole-succinocarboxamide synthase from Sulfolobus acidocaldarius (strain ATCC 33909 / DSM 639 / JCM 8929 / NBRC 15157 / NCIMB 11770).